Consider the following 262-residue polypeptide: Imidazole glycerol phosphate synthase subunit HisF (262 aa).

Active-site residues include Asp-11 and Asp-130.

This sequence belongs to the HisA/HisF family. Heterodimer of HisH and HisF.

The protein resides in the cytoplasm. It carries out the reaction 5-[(5-phospho-1-deoxy-D-ribulos-1-ylimino)methylamino]-1-(5-phospho-beta-D-ribosyl)imidazole-4-carboxamide + L-glutamine = D-erythro-1-(imidazol-4-yl)glycerol 3-phosphate + 5-amino-1-(5-phospho-beta-D-ribosyl)imidazole-4-carboxamide + L-glutamate + H(+). Its pathway is amino-acid biosynthesis; L-histidine biosynthesis; L-histidine from 5-phospho-alpha-D-ribose 1-diphosphate: step 5/9. IGPS catalyzes the conversion of PRFAR and glutamine to IGP, AICAR and glutamate. The HisF subunit catalyzes the cyclization activity that produces IGP and AICAR from PRFAR using the ammonia provided by the HisH subunit. This is Imidazole glycerol phosphate synthase subunit HisF from Rhodopirellula baltica (strain DSM 10527 / NCIMB 13988 / SH1).